The sequence spans 235 residues: Transcriptional regulatory protein WalR (235 aa).

Positions 4 to 117 constitute a Response regulatory domain; that stretch reads KILVVDDEKP…ELLARVKANL (114 aa). Asp53 carries the 4-aspartylphosphate modification. Residues 132-231 constitute a DNA-binding region (ompR/PhoB-type); sequence SNEIHIGSLV…RRGVGYYLRN (100 aa).

As to quaternary structure, homodimer. Phosphorylated by WalK.

It localises to the cytoplasm. Member of the two-component regulatory system WalK/WalR involved in the regulation of the ftsAZ operon, the yocH, ykvT, cwlO, lytE, ydjM, yjeA, yoeB genes and the tagAB and tagDEF operons. Binds to the ftsAZ P1 promoter sequence in vitro. WalR has been shown to directly bind to the regulatory regions of yocH, ykvT, tagAB/tagDEF. Activates cwlO, lytE and ydjM and represses yoeB and yjeA. The chain is Transcriptional regulatory protein WalR from Bacillus subtilis (strain 168).